A 547-amino-acid polypeptide reads, in one-letter code: Chaperonin GroEL (547 aa).

ATP-binding positions include 30–33, Lys-51, 87–91, Gly-415, 479–481, and Asp-495; these read TLGP, DGTTT, and NAA.

This sequence belongs to the chaperonin (HSP60) family. As to quaternary structure, forms a cylinder of 14 subunits composed of two heptameric rings stacked back-to-back. Interacts with the co-chaperonin GroES.

It is found in the cytoplasm. It catalyses the reaction ATP + H2O + a folded polypeptide = ADP + phosphate + an unfolded polypeptide.. Functionally, together with its co-chaperonin GroES, plays an essential role in assisting protein folding. The GroEL-GroES system forms a nano-cage that allows encapsulation of the non-native substrate proteins and provides a physical environment optimized to promote and accelerate protein folding. The protein is Chaperonin GroEL of Bordetella bronchiseptica (strain ATCC BAA-588 / NCTC 13252 / RB50) (Alcaligenes bronchisepticus).